We begin with the raw amino-acid sequence, 274 residues long: Undecaprenyl-diphosphatase (274 aa).

8 helical membrane-spanning segments follow: residues 6 to 26 (SLFIAFVLGVVEGLTEFLPVS), 45 to 65 (AKTFEVIIQLGSILAVVVMFW), 94 to 114 (GHILLAMIPAVVLGLLFHDVI), 117 to 137 (LFAPKNVMYALVVGGFLLLAA), 155 to 174 (YRQAFMIGCFQCLALWPGFS), 191 to 211 (YAAAEFSFILAVPMMIGASGL), 223 to 243 (GDLPMFAVGFATAFVVALIAI), and 253 to 273 (ISFVPFAIYRFIVAGVVYMVF).

The protein belongs to the UppP family.

It is found in the cell inner membrane. The catalysed reaction is di-trans,octa-cis-undecaprenyl diphosphate + H2O = di-trans,octa-cis-undecaprenyl phosphate + phosphate + H(+). Catalyzes the dephosphorylation of undecaprenyl diphosphate (UPP). Confers resistance to bacitracin. The protein is Undecaprenyl-diphosphatase of Serratia proteamaculans (strain 568).